A 136-amino-acid polypeptide reads, in one-letter code: Histone H3.3 (136 aa).

The interval 1 to 41 is disordered; that stretch reads MARTKQTARKSTGVKAPRKQLATKAARKSAPVSGGVKKPHK.

The protein belongs to the histone H3 family. In terms of assembly, the nucleosome is a histone octamer containing two molecules each of H2A, H2B, H3 and H4 assembled in one H3-H4 heterotetramer and two H2A-H2B heterodimers. The octamer wraps approximately 147 bp of DNA. Acetylated. Acetylation occurs almost exclusively in the MAC.

The protein resides in the nucleus. It localises to the chromosome. Macronuclear replacement variant which replaces conventional H3 in a subset of nucleosomes. Nucleosomes wrap and compact DNA into chromatin, limiting DNA accessibility to the cellular machineries which require DNA as a template. Histones thereby play a central role in transcription regulation, DNA repair, DNA replication and chromosomal stability. DNA accessibility is regulated via a complex set of post-translational modifications of histones, also called histone code, and nucleosome remodeling. Functions redundantly to H3.4. H3.3 deposition into chromatin is mainly transcription-associated and DNA replication-independent, but it can also enter a replication-coupled pathway. Although not essential for vegetative growth, minor H3 variants are required for producing viable conjugation progeny by affecting late developmental stages of conjugation. The chain is Histone H3.3 from Tetrahymena pyriformis.